A 372-amino-acid chain; its full sequence is Spermidine/putrescine import ATP-binding protein PotA (372 aa).

The ABC transporter domain maps to 12-250 (VSIRSVRKVY…PRNRFVADFI (239 aa)). 48-55 (GPSGCGKT) is a binding site for ATP.

Belongs to the ABC transporter superfamily. Spermidine/putrescine importer (TC 3.A.1.11.1) family. In terms of assembly, the complex is composed of two ATP-binding proteins (PotA), two transmembrane proteins (PotB and PotC) and a solute-binding protein (PotD).

Its subcellular location is the cell inner membrane. The catalysed reaction is ATP + H2O + polyamine-[polyamine-binding protein]Side 1 = ADP + phosphate + polyamineSide 2 + [polyamine-binding protein]Side 1.. Functionally, part of the ABC transporter complex PotABCD involved in spermidine/putrescine import. Responsible for energy coupling to the transport system. In Pseudomonas fluorescens (strain ATCC BAA-477 / NRRL B-23932 / Pf-5), this protein is Spermidine/putrescine import ATP-binding protein PotA.